The primary structure comprises 290 residues: dATP/dGTP diphosphohydrolase (290 aa).

Residues 103–141 (VPGVREQRGSVQPVPDSEEGLDMQPVPAPSPSRSKKRAY) are disordered. A C2H2-type zinc finger spans residues 262–285 (HLCVVCGQRFGSEDDRASHYTTTH).

This sequence belongs to the Caudovirales dATP/dGTP diphosphohydrolase family. Co(2+) serves as cofactor.

The enzyme catalyses dGTP + H2O = dGMP + diphosphate + H(+). It catalyses the reaction dATP + H2O = dAMP + diphosphate + H(+). Its pathway is purine metabolism. In terms of biological role, catalyzes the hydrolysis of dGTP into dGMP, which is needed among other for the first step of biosynthesis of dZTP (2-amino-2'-deoxyadenosine-5'-triphosphate). The sequence is that of dATP/dGTP diphosphohydrolase from Salmonella phage PMBT28.